We begin with the raw amino-acid sequence, 301 residues long: Nucleotide-binding protein Rfer_1653 (301 aa).

Position 15-22 (15-22 (GMSGSGKS)) interacts with ATP. 64–67 (DVRT) serves as a coordination point for GTP.

It belongs to the RapZ-like family.

Its function is as follows. Displays ATPase and GTPase activities. This Albidiferax ferrireducens (strain ATCC BAA-621 / DSM 15236 / T118) (Rhodoferax ferrireducens) protein is Nucleotide-binding protein Rfer_1653.